Here is a 314-residue protein sequence, read N- to C-terminus: ADP-L-glycero-D-manno-heptose-6-epimerase (314 aa).

NADP(+)-binding positions include 10–11 (MI), 31–32 (DH), Lys-38, Arg-53, 75–79 (EGACS), and Asn-92. The active-site Proton acceptor is Tyr-139. Lys-143 serves as a coordination point for NADP(+). Asn-174 contacts substrate. NADP(+) contacts are provided by Val-175 and Lys-183. Lys-183 functions as the Proton acceptor in the catalytic mechanism. Substrate-binding positions include Ser-185, His-192, 206–209 (FAGS), Arg-214, and Tyr-277.

Belongs to the NAD(P)-dependent epimerase/dehydratase family. HldD subfamily. Homopentamer. Requires NADP(+) as cofactor.

It catalyses the reaction ADP-D-glycero-beta-D-manno-heptose = ADP-L-glycero-beta-D-manno-heptose. It participates in nucleotide-sugar biosynthesis; ADP-L-glycero-beta-D-manno-heptose biosynthesis; ADP-L-glycero-beta-D-manno-heptose from D-glycero-beta-D-manno-heptose 7-phosphate: step 4/4. Catalyzes the interconversion between ADP-D-glycero-beta-D-manno-heptose and ADP-L-glycero-beta-D-manno-heptose via an epimerization at carbon 6 of the heptose. The polypeptide is ADP-L-glycero-D-manno-heptose-6-epimerase (Vibrio cholerae serotype O1 (strain ATCC 39541 / Classical Ogawa 395 / O395)).